Reading from the N-terminus, the 244-residue chain is Large ribosomal subunit protein uL30 (244 aa).

The tract at residues 1–37 is disordered; sequence MAPTKKVPQVPETVLKRRKQRADARTKAAQHKVTVAA.

This sequence belongs to the universal ribosomal protein uL30 family.

Its function is as follows. Binds to G-rich structures in 28S rRNA and in mRNAs. Plays a regulatory role in the translation apparatus; inhibits cell-free translation of mRNAs. The polypeptide is Large ribosomal subunit protein uL30 (rpl-7) (Caenorhabditis elegans).